The following is a 117-amino-acid chain: G antigen 4 (117 aa).

A disordered region spans residues 1-117 (MSWRGRSTYY…PEEGEKQSQC (117 aa)). 2 stretches are compositionally biased toward acidic residues: residues 32–45 (FSDE…EEGE) and 87–96 (ECEDGPDGQE). The segment covering 103–117 (EEVKTPEEGEKQSQC) has biased composition (basic and acidic residues).

This sequence belongs to the GAGE family. As to expression, expressed in a variety of tumor tissues but not in normal tissues, except testis.

Its function is as follows. Antigen, recognized on melanoma by autologous cytolytic T-lymphocytes. This is G antigen 4 from Homo sapiens (Human).